Consider the following 335-residue polypeptide: Beta-ketoacyl-[acyl-carrier-protein] synthase III 1 (335 aa).

Residues C116 and H256 contribute to the active site. The ACP-binding stretch occupies residues 257-261; it reads QANQR. N286 is a catalytic residue.

Belongs to the thiolase-like superfamily. FabH family. Homodimer.

The protein resides in the cytoplasm. The catalysed reaction is malonyl-[ACP] + acetyl-CoA + H(+) = 3-oxobutanoyl-[ACP] + CO2 + CoA. It participates in lipid metabolism; fatty acid biosynthesis. Functionally, catalyzes the condensation reaction of fatty acid synthesis by the addition to an acyl acceptor of two carbons from malonyl-ACP. Catalyzes the first condensation reaction which initiates fatty acid synthesis and may therefore play a role in governing the total rate of fatty acid production. Possesses both acetoacetyl-ACP synthase and acetyl transacylase activities. Its substrate specificity determines the biosynthesis of branched-chain and/or straight-chain of fatty acids. In Bacteroides thetaiotaomicron (strain ATCC 29148 / DSM 2079 / JCM 5827 / CCUG 10774 / NCTC 10582 / VPI-5482 / E50), this protein is Beta-ketoacyl-[acyl-carrier-protein] synthase III 1.